Here is a 342-residue protein sequence, read N- to C-terminus: Photosystem II D2 protein (342 aa).

At 1–29 the chain is on the cytoplasmic side; it reads ERGWFDILDDWLKRDRFVFVGWSGILLFP. Residues 30-50 traverse the membrane as a helical segment; sequence CAYLALGGWLTGTTFVTSWYT. Residues 51–113 are Lumenal-facing; the sequence is HGLASSYLEG…IALHGAFGLI (63 aa). His-107 is a binding site for chlorophyll a. The helical transmembrane segment at 114-130 threads the bilayer; the sequence is GFMLRQFEIARLVGVRP. Pheophytin a is bound by residues Gln-119 and Asn-132. The Cytoplasmic segment spans residues 131–141; sequence YNAIAFSAPIA. Residues 142–155 form a helical membrane-spanning segment; that stretch reads VFVSVFLIYPLGQS. Over 156 to 196 the chain is Lumenal; that stretch reads SWFFAPSFGVAAIFRFLLFFQGFHNWTLNPFHMMGVAGVLG. Chlorophyll a is bound at residue His-187. Residues 197-217 form a helical membrane-spanning segment; sequence GALLCAIHGATVENTLFQDGE. The a plastoquinone site is built by His-204 and Phe-251. Residue His-204 participates in Fe cation binding. At 218 to 267 the chain is on the cytoplasmic side; that stretch reads GASTFRAFNPTQAEETYSMVTANRFWSQIFGIAFSNKRWLHFFMLFVPVT. Fe cation is bound at residue His-258. Residues 268–284 form a helical membrane-spanning segment; it reads GLWMSAIGVVGLALNLR. Residues 285–342 lie on the Lumenal side of the membrane; it reads SYDFISQEIRAAEDPEFETFYTKNLLLNEGIRAWMAPQDQPHENFVFPEEVLPRGNAL.

This sequence belongs to the reaction center PufL/M/PsbA/D family. PSII is composed of 1 copy each of membrane proteins PsbA, PsbB, PsbC, PsbD, PsbE, PsbF, PsbH, PsbI, PsbJ, PsbK, PsbL, PsbM, PsbT, PsbX, PsbY, PsbZ, Psb30/Ycf12, peripheral proteins PsbO, CyanoQ (PsbQ), PsbU, PsbV and a large number of cofactors. It forms dimeric complexes. The D1/D2 heterodimer binds P680, chlorophylls that are the primary electron donor of PSII, and subsequent electron acceptors. It shares a non-heme iron and each subunit binds pheophytin, quinone, additional chlorophylls, carotenoids and lipids. There is also a Cl(-1) ion associated with D1 and D2, which is required for oxygen evolution. The PSII complex binds additional chlorophylls, carotenoids and specific lipids. serves as cofactor.

It localises to the cellular thylakoid membrane. The enzyme catalyses 2 a plastoquinone + 4 hnu + 2 H2O = 2 a plastoquinol + O2. Photosystem II (PSII) is a light-driven water:plastoquinone oxidoreductase that uses light energy to abstract electrons from H(2)O, generating O(2) and a proton gradient subsequently used for ATP formation. It consists of a core antenna complex that captures photons, and an electron transfer chain that converts photonic excitation into a charge separation. The D1/D2 (PsbA/PsbD) reaction center heterodimer binds P680, the primary electron donor of PSII as well as several subsequent electron acceptors. D2 is needed for assembly of a stable PSII complex. The polypeptide is Photosystem II D2 protein (Thermostichus vulcanus (Synechococcus vulcanus)).